The chain runs to 359 residues: Peptide chain release factor 1 (359 aa).

At Gln238 the chain carries N5-methylglutamine.

This sequence belongs to the prokaryotic/mitochondrial release factor family. In terms of processing, methylated by PrmC. Methylation increases the termination efficiency of RF1.

Its subcellular location is the cytoplasm. Peptide chain release factor 1 directs the termination of translation in response to the peptide chain termination codons UAG and UAA. The polypeptide is Peptide chain release factor 1 (Mycoplasmopsis pulmonis (strain UAB CTIP) (Mycoplasma pulmonis)).